Here is a 100-residue protein sequence, read N- to C-terminus: NADH-quinone oxidoreductase subunit K 1 (100 aa).

The next 3 membrane-spanning stretches (helical) occupy residues 3-23 (IIKAYIILSIALFLIGLLGVI), 28-48 (LITVLVSTELMLNGINLALVA), and 60-80 (IFAFFVLTVAAAEVAVGLGLI).

This sequence belongs to the complex I subunit 4L family. NDH-1 is composed of 14 different subunits. Subunits NuoA, H, J, K, L, M, N constitute the membrane sector of the complex.

Its subcellular location is the cell inner membrane. It catalyses the reaction a quinone + NADH + 5 H(+)(in) = a quinol + NAD(+) + 4 H(+)(out). In terms of biological role, NDH-1 shuttles electrons from NADH, via FMN and iron-sulfur (Fe-S) centers, to quinones in the respiratory chain. The immediate electron acceptor for the enzyme in this species is believed to be ubiquinone. Couples the redox reaction to proton translocation (for every two electrons transferred, four hydrogen ions are translocated across the cytoplasmic membrane), and thus conserves the redox energy in a proton gradient. In Aquifex aeolicus (strain VF5), this protein is NADH-quinone oxidoreductase subunit K 1.